We begin with the raw amino-acid sequence, 296 residues long: MTDLQSIAPRDKAEILAQALPYIRKFHGKTIVIKYGGNAMTDPALQADFAEDVVLLKLVGMNPVVVHGGGPQIETALKRLGKQGHFIQGMRVTDAETMEVVEWVLAGEVQQDIVGLINQAGGKAVGLTGRDGGLIRARKLKMVDKDDPSKEHDIGQVGDIVSIDPSVVKALQDDAFIPVISPLGFGEENESYNINADVVASKLATVLKAEKLMMLTNIPGVLNKSGALIPELTAREIDELVVDGTISGGMLPKIAGAIDAAKSGVNAVHIVDGRVPHAMLLEILTEQAYGTMIRSH.

Substrate-binding positions include 69–70, Arg91, and Asn193; that span reads GG.

This sequence belongs to the acetylglutamate kinase family. ArgB subfamily.

Its subcellular location is the cytoplasm. The enzyme catalyses N-acetyl-L-glutamate + ATP = N-acetyl-L-glutamyl 5-phosphate + ADP. It participates in amino-acid biosynthesis; L-arginine biosynthesis; N(2)-acetyl-L-ornithine from L-glutamate: step 2/4. In terms of biological role, catalyzes the ATP-dependent phosphorylation of N-acetyl-L-glutamate. The protein is Acetylglutamate kinase of Paracidovorax citrulli (strain AAC00-1) (Acidovorax citrulli).